We begin with the raw amino-acid sequence, 389 residues long: Phospho-N-acetylmuramoyl-pentapeptide-transferase (389 aa).

The next 10 membrane-spanning stretches (helical) occupy residues 25–45 (RAVM…PWVI), 73–93 (TMGG…WGDL), 97–117 (FIWI…VDDY), 135–155 (FWQS…VSEA), 190–210 (ISYP…IVGA), 222–242 (GLVI…AYVM), 258–278 (GAGE…AFLW), 286–306 (VFMG…VAVI), 311–331 (IVLF…MLQV), and 366–386 (QVVV…LTTL).

It belongs to the glycosyltransferase 4 family. MraY subfamily. It depends on Mg(2+) as a cofactor.

Its subcellular location is the cell inner membrane. The catalysed reaction is UDP-N-acetyl-alpha-D-muramoyl-L-alanyl-gamma-D-glutamyl-meso-2,6-diaminopimeloyl-D-alanyl-D-alanine + di-trans,octa-cis-undecaprenyl phosphate = di-trans,octa-cis-undecaprenyl diphospho-N-acetyl-alpha-D-muramoyl-L-alanyl-D-glutamyl-meso-2,6-diaminopimeloyl-D-alanyl-D-alanine + UMP. The protein operates within cell wall biogenesis; peptidoglycan biosynthesis. In terms of biological role, catalyzes the initial step of the lipid cycle reactions in the biosynthesis of the cell wall peptidoglycan: transfers peptidoglycan precursor phospho-MurNAc-pentapeptide from UDP-MurNAc-pentapeptide onto the lipid carrier undecaprenyl phosphate, yielding undecaprenyl-pyrophosphoryl-MurNAc-pentapeptide, known as lipid I. The polypeptide is Phospho-N-acetylmuramoyl-pentapeptide-transferase (Burkholderia cenocepacia (strain HI2424)).